The following is a 309-amino-acid chain: Olfactory receptor 5B21 (309 aa).

Topologically, residues 1 to 26 (MENSTEVTEFILLGLTDDPNLQIPLL) are extracellular. Asn-3 carries an N-linked (GlcNAc...) asparagine glycan. Residues 27–47 (LAFLFIYLITLLGNGGMMVII) traverse the membrane as a helical segment. Residues 48-55 (HSDSHLHT) are Cytoplasmic-facing. A helical membrane pass occupies residues 56-76 (PMYFFLSNLSLVDLGYSSAVA). Residues 77-95 (PKTVAALRSGDKAISYDGC) lie on the Extracellular side of the membrane. A disulfide bridge connects residues Cys-95 and Cys-177. A helical transmembrane segment spans residues 96–116 (AAQFFFFVGFATVECYLLASM). Residues 117-137 (AYDRHAAVCRPLHYTTTMTAG) are Cytoplasmic-facing. A helical membrane pass occupies residues 138–158 (VCALLATGSYVSGFLNASIHA). Residues 159-199 (AGTFRLSFCGSNEINHFFCDIPPLLALSCSDTRISKLVVFV) lie on the Extracellular side of the membrane. A helical membrane pass occupies residues 200–220 (AGFNVFFTLLVILISYFFICI). The Cytoplasmic portion of the chain corresponds to 221 to 235 (TIQRMHSAEGQKKVF). A helical membrane pass occupies residues 236–256 (STCASHLTALSIFYGTIIFMY). Residues 257 to 270 (LQPNSSQSVDTDKI) are Extracellular-facing. N-linked (GlcNAc...) asparagine glycosylation is present at Asn-260. A helical transmembrane segment spans residues 271–291 (ASVFYTVVIPMLNPLIYSLRN). Topologically, residues 292 to 309 (KEVKSALWKILNKLYPQY) are cytoplasmic.

It belongs to the G-protein coupled receptor 1 family.

The protein resides in the cell membrane. Its function is as follows. Odorant receptor. The sequence is that of Olfactory receptor 5B21 from Homo sapiens (Human).